Here is a 146-residue protein sequence, read N- to C-terminus: Spermidine export protein MdtJ (146 aa).

The next 4 membrane-spanning stretches (helical) occupy residues 1–21, 31–51, 54–74, and 76–96; these read MIYW…TLSM, TGMI…AIAV, VALG…ITTF, and VLWF…MLIA.

The protein belongs to the drug/metabolite transporter (DMT) superfamily. Small multidrug resistance (SMR) (TC 2.A.7.1) family. MdtJ subfamily. As to quaternary structure, forms a complex with MdtI.

It is found in the cell inner membrane. Catalyzes the excretion of spermidine. This Proteus mirabilis (strain HI4320) protein is Spermidine export protein MdtJ.